A 320-amino-acid chain; its full sequence is Beta-ketoacyl-[acyl-carrier-protein] synthase III (320 aa).

Active-site residues include cysteine 114 and histidine 247. Residues 248–252 are ACP-binding; sequence QANRR. Asparagine 277 is an active-site residue.

Belongs to the thiolase-like superfamily. FabH family. As to quaternary structure, homodimer.

It localises to the cytoplasm. It carries out the reaction malonyl-[ACP] + acetyl-CoA + H(+) = 3-oxobutanoyl-[ACP] + CO2 + CoA. It functions in the pathway lipid metabolism; fatty acid biosynthesis. Catalyzes the condensation reaction of fatty acid synthesis by the addition to an acyl acceptor of two carbons from malonyl-ACP. Catalyzes the first condensation reaction which initiates fatty acid synthesis and may therefore play a role in governing the total rate of fatty acid production. Possesses both acetoacetyl-ACP synthase and acetyl transacylase activities. Its substrate specificity determines the biosynthesis of branched-chain and/or straight-chain of fatty acids. The polypeptide is Beta-ketoacyl-[acyl-carrier-protein] synthase III (Neisseria gonorrhoeae (strain ATCC 700825 / FA 1090)).